A 139-amino-acid chain; its full sequence is Ribonuclease P protein component (139 aa).

It belongs to the RnpA family. As to quaternary structure, consists of a catalytic RNA component (M1 or rnpB) and a protein subunit.

It catalyses the reaction Endonucleolytic cleavage of RNA, removing 5'-extranucleotides from tRNA precursor.. Functionally, RNaseP catalyzes the removal of the 5'-leader sequence from pre-tRNA to produce the mature 5'-terminus. It can also cleave other RNA substrates such as 4.5S RNA. The protein component plays an auxiliary but essential role in vivo by binding to the 5'-leader sequence and broadening the substrate specificity of the ribozyme. In Chlamydia felis (strain Fe/C-56) (Chlamydophila felis), this protein is Ribonuclease P protein component.